Here is a 618-residue protein sequence, read N- to C-terminus: Mitochondrial Rho GTPase 2 (618 aa).

Over 1–592 the chain is Cytoplasmic; that stretch reads MRRDVRILLL…ELHPSSFWLR (592 aa). A Miro 1 domain is found at 2–168; it reads RRDVRILLLG…FYYAQKAVLH (167 aa). Residues Gly-16, Lys-17, Thr-18, and Ser-19 each coordinate GTP. Position 18 (Thr-18) interacts with Mg(2+). Residues Pro-35 and Asp-57 each contribute to the Mg(2+) site. Position 59 (Ser-59) interacts with GTP. A Glycyl lysine isopeptide (Lys-Gly) (interchain with G-Cter in ubiquitin) cross-link involves residue Lys-96. Residues Asn-118, Lys-119, Asp-121, Ala-149, and Lys-150 each coordinate GTP. Lys-119 participates in a covalent cross-link: Glycyl lysine isopeptide (Lys-Gly) (interchain with G-Cter in ubiquitin). A Glycyl lysine isopeptide (Lys-Gly) (interchain with G-Cter in ubiquitin) cross-link involves residue Lys-164. EF-hand domains lie at 184–219 and 304–339; these read ACAQ…CFGH and LGYQ…FPAA. Ca(2+) is bound by residues Asp-197, Asp-199, Asp-201, Glu-208, Asp-317, Asp-319, Asp-321, and Glu-328. The 163-residue stretch at 414-576 folds into the Miro 2 domain; that stretch reads RSVLLCKVVG…FTQLATMAAF (163 aa). The GTP site is built by Gly-426, Gly-428, Lys-429, Ser-430, and Ala-431. GDP contacts are provided by Gly-426, Gly-428, Lys-429, Ser-430, and Ala-431. Ser-430 is a Mg(2+) binding site. Mg(2+) is bound at residue Glu-471. GTP is bound by residues Lys-525, Asp-527, and Cys-556. 3 residues coordinate GDP: Lys-525, Asp-527, and Cys-556. The helical; Anchor for type IV membrane protein transmembrane segment at 593-615 threads the bilayer; that stretch reads GLLGVVGAAVAAVLSFSLYRVLV. The Mitochondrial intermembrane segment spans residues 616-618; that stretch reads KSQ.

Belongs to the mitochondrial Rho GTPase family. As to quaternary structure, homodimer. Interacts with the kinesin-binding proteins TRAK1/OIP106 and TRAK2/GRIF1, forming a link between mitochondria and the trafficking apparatus of the microtubules. Interacts with ARMCX3. Found in a complex with KIF5B, OGT, RHOT1 and TRAK1. Post-translationally, ubiquitinated by PRKN in a PINK1-dependent manner, leading to its degradation. Ubiquitously expressed. Highly expressed in heart, liver, skeletal muscle, kidney and pancreas.

Its subcellular location is the mitochondrion outer membrane. The catalysed reaction is GTP + H2O = GDP + phosphate + H(+). It carries out the reaction ATP + H2O = ADP + phosphate + H(+). It catalyses the reaction UTP + H2O = UDP + phosphate + H(+). Functionally, atypical mitochondrial nucleoside-triphosphatase (NTPase) involved in mitochondrial trafficking. Probably involved in control of anterograde transport of mitochondria and their subcellular distribution. Can hydrolyze GTP. Can hydrolyze ATP and UTP. This Homo sapiens (Human) protein is Mitochondrial Rho GTPase 2 (RHOT2).